The following is a 520-amino-acid chain: Hydroxymethylglutaryl-CoA synthase, cytoplasmic (520 aa).

Serine 4 is modified (phosphoserine). Alanine 44 lines the (3S)-3-hydroxy-3-methylglutaryl-CoA pocket. 44 to 46 (AGK) serves as a coordination point for CoA. Residue lysine 46 is modified to N6-acetyllysine. The active-site Proton donor/acceptor is glutamate 95. Positions 129, 167, 171, 221, and 264 each coordinate (3S)-3-hydroxy-3-methylglutaryl-CoA. The active-site Acyl-thioester intermediate is cysteine 129. Asparagine 167 is a binding site for CoA. Residue serine 221 participates in CoA binding. Catalysis depends on histidine 264, which acts as the Proton donor/acceptor. Positions 269 and 273 each coordinate CoA. (3S)-3-hydroxy-3-methylglutaryl-CoA is bound by residues lysine 273, asparagine 343, and serine 377. Lysine 273 carries the N6-acetyllysine modification. At threonine 476 the chain carries Phosphothreonine. The disordered stretch occupies residues 492-520 (HIPSPAKKVPRLPATAAEPEAAVISNGEH). Serine 495 and serine 516 each carry phosphoserine.

This sequence belongs to the thiolase-like superfamily. HMG-CoA synthase family. As to quaternary structure, homodimer.

It is found in the cytoplasm. The catalysed reaction is acetoacetyl-CoA + acetyl-CoA + H2O = (3S)-3-hydroxy-3-methylglutaryl-CoA + CoA + H(+). Its pathway is metabolic intermediate biosynthesis; (R)-mevalonate biosynthesis; (R)-mevalonate from acetyl-CoA: step 2/3. Catalyzes the condensation of acetyl-CoA with acetoacetyl-CoA to form HMG-CoA, which is converted by HMG-CoA reductase (HMGCR) into mevalonate, a precursor for cholesterol synthesis. This chain is Hydroxymethylglutaryl-CoA synthase, cytoplasmic, found in Pongo abelii (Sumatran orangutan).